The following is a 241-amino-acid chain: Large ribosomal subunit protein uL3 (241 aa).

2 disordered regions span residues 140–162 (SHRSIGSTGGRQDPGKTFKNKKM) and 217–241 (PLPGKFRENGASAPATEAPAAEETA). Gln-151 is subject to N5-methylglutamine. The span at 229 to 241 (APATEAPAAEETA) shows a compositional bias: low complexity.

This sequence belongs to the universal ribosomal protein uL3 family. Part of the 50S ribosomal subunit. Forms a cluster with proteins L14 and L19. In terms of processing, methylated by PrmB.

Its function is as follows. One of the primary rRNA binding proteins, it binds directly near the 3'-end of the 23S rRNA, where it nucleates assembly of the 50S subunit. This is Large ribosomal subunit protein uL3 from Methylobacterium radiotolerans (strain ATCC 27329 / DSM 1819 / JCM 2831 / NBRC 15690 / NCIMB 10815 / 0-1).